Consider the following 468-residue polypeptide: Shaggy-related protein kinase theta (468 aa).

Disordered regions lie at residues 1-53 (MNVM…DQST) and 91-112 (HANR…CGTE). The Protein kinase domain maps to 134 to 418 (YMAQRVVGTG…ALEACAHPFF (285 aa)). Residues 140–148 (VGTGSFGVV) and K163 contribute to the ATP site. Catalysis depends on D259, which acts as the Proton acceptor. Phosphotyrosine is present on Y294.

The protein belongs to the protein kinase superfamily. CMGC Ser/Thr protein kinase family. GSK-3 subfamily. Autophosphorylated mainly on threonine and serine residues. In developing pollen.

It catalyses the reaction L-seryl-[protein] + ATP = O-phospho-L-seryl-[protein] + ADP + H(+). The enzyme catalyses L-threonyl-[protein] + ATP = O-phospho-L-threonyl-[protein] + ADP + H(+). May mediate extracellular signals to regulate transcription in differentiating cells. The chain is Shaggy-related protein kinase theta from Brassica napus (Rape).